Consider the following 339-residue polypeptide: DNA-directed RNA polymerase subunit alpha (339 aa).

The interval 1 to 233 (MVREEITGST…DLFLPFIHTE (233 aa)) is alpha N-terminal domain (alpha-NTD). The segment at 266–339 (GIPLNCIFID…IDLPKNKFSL (74 aa)) is alpha C-terminal domain (alpha-CTD).

This sequence belongs to the RNA polymerase alpha chain family. In terms of assembly, in plastids the minimal PEP RNA polymerase catalytic core is composed of four subunits: alpha, beta, beta', and beta''. When a (nuclear-encoded) sigma factor is associated with the core the holoenzyme is formed, which can initiate transcription.

The protein localises to the plastid. It localises to the chloroplast. The enzyme catalyses RNA(n) + a ribonucleoside 5'-triphosphate = RNA(n+1) + diphosphate. DNA-dependent RNA polymerase catalyzes the transcription of DNA into RNA using the four ribonucleoside triphosphates as substrates. The polypeptide is DNA-directed RNA polymerase subunit alpha (Saccharum hybrid (Sugarcane)).